The primary structure comprises 156 residues: Small ribosomal subunit protein uS7 (156 aa).

It belongs to the universal ribosomal protein uS7 family. In terms of assembly, part of the 30S ribosomal subunit. Contacts proteins S9 and S11.

In terms of biological role, one of the primary rRNA binding proteins, it binds directly to 16S rRNA where it nucleates assembly of the head domain of the 30S subunit. Is located at the subunit interface close to the decoding center, probably blocks exit of the E-site tRNA. The protein is Small ribosomal subunit protein uS7 of Saccharophagus degradans (strain 2-40 / ATCC 43961 / DSM 17024).